The chain runs to 184 residues: Alpha-tubulin N-acetyltransferase (184 aa).

An N-acetyltransferase domain is found at 1–174; it reads MDTHGEKMKN…NNFVIFAEYF (174 aa). Acetyl-CoA contacts are provided by residues 108 to 121 and 144 to 153; these read FYIRRDFRKRGLGL and SHKLRSFLKK.

This sequence belongs to the acetyltransferase ATAT1 family.

The enzyme catalyses L-lysyl-[alpha-tubulin] + acetyl-CoA = N(6)-acetyl-L-lysyl-[alpha-tubulin] + CoA + H(+). Its function is as follows. Specifically acetylates 'Lys-40' in alpha-tubulin on the lumenal side of microtubules. Promotes microtubule destabilization and accelerates microtubule dynamics; this activity may be independent of acetylation activity. Acetylates alpha-tubulin with a slow enzymatic rate, due to a catalytic site that is not optimized for acetyl transfer. Enters the microtubule through each end and diffuses quickly throughout the lumen of microtubules. Acetylates only long/old microtubules because of its slow acetylation rate since it does not have time to act on dynamically unstable microtubules before the enzyme is released. The polypeptide is Alpha-tubulin N-acetyltransferase (Plasmodium vivax (strain Salvador I)).